A 295-amino-acid chain; its full sequence is Formamidopyrimidine-DNA glycosylase (295 aa).

The active-site Schiff-base intermediate with DNA is the Pro2. Glu3 functions as the Proton donor in the catalytic mechanism. The Proton donor; for beta-elimination activity role is filled by Lys61. Positions 95, 117, and 159 each coordinate DNA. The FPG-type zinc-finger motif lies at 245–279; sequence HAYGREGEACERCGTPIRRVAFMNRSSYFCPVCQP. Residue Arg269 is the Proton donor; for delta-elimination activity of the active site.

The protein belongs to the FPG family. As to quaternary structure, monomer. It depends on Zn(2+) as a cofactor.

It carries out the reaction Hydrolysis of DNA containing ring-opened 7-methylguanine residues, releasing 2,6-diamino-4-hydroxy-5-(N-methyl)formamidopyrimidine.. The catalysed reaction is 2'-deoxyribonucleotide-(2'-deoxyribose 5'-phosphate)-2'-deoxyribonucleotide-DNA = a 3'-end 2'-deoxyribonucleotide-(2,3-dehydro-2,3-deoxyribose 5'-phosphate)-DNA + a 5'-end 5'-phospho-2'-deoxyribonucleoside-DNA + H(+). In terms of biological role, involved in base excision repair of DNA damaged by oxidation or by mutagenic agents. Acts as a DNA glycosylase that recognizes and removes damaged bases. Has a preference for oxidized purines, such as 7,8-dihydro-8-oxoguanine (8-oxoG). Has AP (apurinic/apyrimidinic) lyase activity and introduces nicks in the DNA strand. Cleaves the DNA backbone by beta-delta elimination to generate a single-strand break at the site of the removed base with both 3'- and 5'-phosphates. This chain is Formamidopyrimidine-DNA glycosylase, found in Nocardioides sp. (strain ATCC BAA-499 / JS614).